The chain runs to 296 residues: GTP cyclohydrolase FolE2 (296 aa).

Belongs to the GTP cyclohydrolase IV family.

It catalyses the reaction GTP + H2O = 7,8-dihydroneopterin 3'-triphosphate + formate + H(+). It functions in the pathway cofactor biosynthesis; 7,8-dihydroneopterin triphosphate biosynthesis; 7,8-dihydroneopterin triphosphate from GTP: step 1/1. Functionally, converts GTP to 7,8-dihydroneopterin triphosphate. In Delftia acidovorans (strain DSM 14801 / SPH-1), this protein is GTP cyclohydrolase FolE2.